Reading from the N-terminus, the 434-residue chain is Serine hydroxymethyltransferase (434 aa).

(6S)-5,6,7,8-tetrahydrofolate-binding positions include leucine 133 and 137–139 (GHL). Lysine 242 bears the N6-(pyridoxal phosphate)lysine mark.

This sequence belongs to the SHMT family. Homodimer. Pyridoxal 5'-phosphate serves as cofactor.

Its subcellular location is the cytoplasm. It carries out the reaction (6R)-5,10-methylene-5,6,7,8-tetrahydrofolate + glycine + H2O = (6S)-5,6,7,8-tetrahydrofolate + L-serine. The protein operates within one-carbon metabolism; tetrahydrofolate interconversion. It functions in the pathway amino-acid biosynthesis; glycine biosynthesis; glycine from L-serine: step 1/1. Functionally, catalyzes the reversible interconversion of serine and glycine with tetrahydrofolate (THF) serving as the one-carbon carrier. This reaction serves as the major source of one-carbon groups required for the biosynthesis of purines, thymidylate, methionine, and other important biomolecules. Also exhibits THF-independent aldolase activity toward beta-hydroxyamino acids, producing glycine and aldehydes, via a retro-aldol mechanism. The chain is Serine hydroxymethyltransferase from Methylobacterium radiotolerans (strain ATCC 27329 / DSM 1819 / JCM 2831 / NBRC 15690 / NCIMB 10815 / 0-1).